A 329-amino-acid polypeptide reads, in one-letter code: CDP-6-deoxy-L-threo-D-glycero-4-hexulose-3-dehydrase reductase (329 aa).

A 2Fe-2S ferredoxin-type domain is found at 2–93 (SLNVKLHPSG…ELDVNYYPEL (92 aa)). Residues Cys37, Cys42, Cys45, and Cys75 each contribute to the [2Fe-2S] cluster site. Residues 98 to 197 (KKTYPCKLDS…EGPQGTFFVR (100 aa)) enclose the FAD-binding FR-type domain.

In terms of assembly, monomer.

It functions in the pathway nucleotide-sugar biosynthesis; CDP-ascarylose biosynthesis. Its pathway is bacterial outer membrane biogenesis; lipopolysaccharide biosynthesis. Participates in the conversion of CDP-6-deoxy-D-glycero-L-threo-4-hexulose to 3,6-dideoxy-D-glycero-D-glycero-4-hexulose together with CDP-6-deoxy-D-glycero-L-threo-4-hexulose-3-dehydrase (E1) in two consecutive steps. The detailed mechanism of E3 is not yet resolved. This is CDP-6-deoxy-L-threo-D-glycero-4-hexulose-3-dehydrase reductase (ascD) from Yersinia pseudotuberculosis serotype I (strain IP32953).